The chain runs to 545 residues: MAFNDLLKQVGGVGRFQLIQVTMVVAPLLLMASHNTLQNFTAAIPAHHCRPPANANLSKDGGLEAWLPLDKQGRPESCLRFPFPHNGTEANGTGVTEPCLDGWVYDNSTFPSTIVTEWNLVCSHRAFRQLAQSLFMVGVLLGAMMFGYLADRLGRRKVLILNYLQTAVSGTCAAYAPNYTVYCIFRLLSGMSLASIAINCMTLNMEWMPIHTRAYVGTLIGYVYSLGQFLLAGIAYAVPHWRHLQLAVSVPFFVAFIYSWFFIESARWYSSSGRLDLTLRALQRVARINGKQEEGAKLSIEVLQTSLQKELTLNKGQASAMELLRCPTLRRLFLCLSMLWFATSFAYYGLVMDLQGFGVSMYLIQVIFGAVDLPAKFVCFLVINSMGRRPAQLASLLLAGICILVNGIIPRGHTIIRTSLAVLGKGCLASSFNCIFLYTGELYPTMIRQTGLGMGSTMARVGSIVSPLISMTAEFYPSIPLFIFGAVPVAASAVTALLPETLGQPLPDTVQDLKSRSRGKQKQQQLEQQKQMIPLQVSTQEKNGL.

The Cytoplasmic portion of the chain corresponds to 1-9 (MAFNDLLKQ). Residues 10 to 30 (VGGVGRFQLIQVTMVVAPLLL) traverse the membrane as a helical segment. Topologically, residues 31–129 (MASHNTLQNF…LVCSHRAFRQ (99 aa)) are extracellular. Asparagine 39, asparagine 56, asparagine 86, asparagine 91, and asparagine 107 each carry an N-linked (GlcNAc...) asparagine glycan. Residues 130–150 (LAQSLFMVGVLLGAMMFGYLA) traverse the membrane as a helical segment. The Cytoplasmic portion of the chain corresponds to 151-157 (DRLGRRK). Residues 158-177 (VLILNYLQTAVSGTCAAYAP) traverse the membrane as a helical segment. Asparagine 178 carries an N-linked (GlcNAc...) asparagine glycan. The Extracellular segment spans residues 178–180 (NYT). The chain crosses the membrane as a helical span at residues 181-201 (VYCIFRLLSGMSLASIAINCM). Topologically, residues 202–218 (TLNMEWMPIHTRAYVGT) are cytoplasmic. The chain crosses the membrane as a helical span at residues 219–239 (LIGYVYSLGQFLLAGIAYAVP). Topologically, residues 240-242 (HWR) are extracellular. A helical membrane pass occupies residues 243 to 263 (HLQLAVSVPFFVAFIYSWFFI). At 264–331 (ESARWYSSSG…ELLRCPTLRR (68 aa)) the chain is on the cytoplasmic side. A helical membrane pass occupies residues 332–352 (LFLCLSMLWFATSFAYYGLVM). Topologically, residues 353-362 (DLQGFGVSMY) are extracellular. The helical transmembrane segment at 363–383 (LIQVIFGAVDLPAKFVCFLVI) threads the bilayer. The Cytoplasmic portion of the chain corresponds to 384–389 (NSMGRR). The chain crosses the membrane as a helical span at residues 390 to 410 (PAQLASLLLAGICILVNGIIP). At 411–419 (RGHTIIRTS) the chain is on the extracellular side. Residues 420–440 (LAVLGKGCLASSFNCIFLYTG) form a helical membrane-spanning segment. The Cytoplasmic portion of the chain corresponds to 441–450 (ELYPTMIRQT). The chain crosses the membrane as a helical span at residues 451-471 (GLGMGSTMARVGSIVSPLISM). The Extracellular portion of the chain corresponds to 472–478 (TAEFYPS). The chain crosses the membrane as a helical span at residues 479 to 499 (IPLFIFGAVPVAASAVTALLP). Over 500–545 (ETLGQPLPDTVQDLKSRSRGKQKQQQLEQQKQMIPLQVSTQEKNGL) the chain is Cytoplasmic. Positions 515–545 (SRSRGKQKQQQLEQQKQMIPLQVSTQEKNGL) are disordered. Residues 522–531 (KQQQLEQQKQ) are compositionally biased toward low complexity. Over residues 536–545 (QVSTQEKNGL) the composition is skewed to polar residues.

It belongs to the major facilitator (TC 2.A.1) superfamily. Organic cation transporter (TC 2.A.1.19) family. Glycosylated. Glycosylation is necessary for proper targeting of the transporter to the plasma membrane. Expressed in kidney. In kidney, restricted to the proximal convoluted tubule (representing S1 and S2 segments). In brain, expressed in neurons of the cortex cerebri and hippocampus as well as in the ependymal cell layer of the choroid plexus.

It localises to the basolateral cell membrane. Its subcellular location is the basal cell membrane. The catalysed reaction is (6R)-L-erythro-5,6,7,8-tetrahydrobiopterin(out) + a dicarboxylate(in) = (6R)-L-erythro-5,6,7,8-tetrahydrobiopterin(in) + a dicarboxylate(out). The enzyme catalyses L-erythro-7,8-dihydrobiopterin(out) + a dicarboxylate(in) = L-erythro-7,8-dihydrobiopterin(in) + a dicarboxylate(out). It carries out the reaction L-sepiapterin(out) + a dicarboxylate(in) = L-sepiapterin(in) + a dicarboxylate(out). It catalyses the reaction prostaglandin F2alpha(out) + a dicarboxylate(in) = prostaglandin F2alpha(in) + a dicarboxylate(out). The catalysed reaction is prostaglandin E2(out) + a dicarboxylate(in) = prostaglandin E2(in) + a dicarboxylate(out). The enzyme catalyses 3',5'-cyclic AMP(out) + a dicarboxylate(in) = 3',5'-cyclic AMP(in) + a dicarboxylate(out). It carries out the reaction 3',5'-cyclic GMP(out) + a dicarboxylate(in) = 3',5'-cyclic GMP(in) + a dicarboxylate(out). It catalyses the reaction urate(out) + a dicarboxylate(in) = urate(in) + a dicarboxylate(out). The catalysed reaction is kynurenate(out) + glutarate(in) = kynurenate(in) + glutarate(out). The enzyme catalyses (indol-3-yl)acetate(out) + a dicarboxylate(in) = (indol-3-yl)acetate(in) + a dicarboxylate(out). It carries out the reaction indoxyl sulfate(out) + a dicarboxylate(in) = indoxyl sulfate(in) + a dicarboxylate(out). It catalyses the reaction N-benzoylglycine(out) + a dicarboxylate(in) = N-benzoylglycine(in) + a dicarboxylate(out). The catalysed reaction is 3-carboxy-4-methyl-5-propyl-2-furanpropanoate(out) + a dicarboxylate(in) = 3-carboxy-4-methyl-5-propyl-2-furanpropanoate(in) + a dicarboxylate(out). Functionally, secondary active transporter that functions as a Na(+)-independent organic anion (OA)/dicarboxylate antiporter where the uptake of one molecule of OA into the cell is coupled with an efflux of one molecule of intracellular dicarboxylate such as 2-oxoglutarate or glutarate. Mediates the uptake of OA across the basolateral side of proximal tubule epithelial cells, thereby contributing to the renal elimination of endogenous OA from the systemic circulation into the urine. Functions as a biopterin transporters involved in the uptake and the secretion of coenzymes tetrahydrobiopterin (BH4), dihydrobiopterin (BH2) and sepiapterin to urine, thereby determining baseline levels of blood biopterins. Transports prostaglandin E2 (PGE2) and prostaglandin F2-alpha (PGF2-alpha) and may contribute to their renal excretion. Involved in the transport of neuroactive tryptophan metabolites kynurenate (KYNA) and xanthurenate (XA). May transport glutamate. Also involved in the disposition of uremic toxins and potentially toxic xenobiotics by the renal organic anion secretory pathway, helping reduce their undesired toxicological effects on the body. Uremic toxins include the indoxyl sulfate (IS), hippurate/N-benzoylglycine (HA), indole acetate (IA) and 3-carboxy-4- methyl-5-propyl-2-furanpropionate(CMPF) and urate. Xenobiotics include the mycotoxin ochratoxin (OTA). May also contribute to the transport of organic compounds in testes across the blood-testis-barrier. The chain is Solute carrier family 22 member 6 from Mus musculus (Mouse).